The sequence spans 453 residues: MLKQILADMYIDPELLAELSEEQKQILFFKMRQEQIRRWQEWEAKCDQNEDKKRNSRPRKACNKSVHWRFGTDQEVWVWVMGEHSSDKPYDQICDEIIAEQARREAEKEAEQLRKKQEVELSQLSTLRLHPHNNADLLKKNTDTKQMVNENVRIANQQIINDENQSIIEKPRTVEDILSAATSKNKYEVKQKKENILKEKENDRLQERTQEIYMNWKEAQEVKQKLEKEDKEWQESLRKSKLADERRRSVAKQARDDYKRLSMQGINRGKVADTAKTFGAVKRPPIPPKPKLPPSANNSSINRMDRRQGIRRLNSAINRENIIKWFKEEQLPLKAGWDKSGSYVEPWFHGIISRQESEQLLGSHGHGSFLLRVSEKIQGYVLSYCSEEGCAHFLIDASATSYSFLGVDQLQHTTLADLVEYHKTEPIPSLGRELLRFPCGQKKGVCDYSDLLE.

The stretch at 96-127 (EIIAEQARREAEKEAEQLRKKQEVELSQLSTL) forms a coiled coil. The disordered stretch occupies residues 280-301 (AVKRPPIPPKPKLPPSANNSSI). Over residues 284–293 (PPIPPKPKLP) the composition is skewed to pro residues. The SH2 domain occupies 347–439 (WFHGIISRQE…LGRELLRFPC (93 aa)).

The protein localises to the cytoplasm. Functionally, inhibits estrogen-induced cell proliferation. This is SH2 domain-containing protein 4A (sh2d4a) from Xenopus tropicalis (Western clawed frog).